Here is a 260-residue protein sequence, read N- to C-terminus: Late transcription factor 1 (260 aa).

Belongs to the chordopoxvirinae VLTF-1 family. As to quaternary structure, interacts with the late transcription factors VLTF-2 and VLTF-3. Interacts with the late transcription elongation factor VLTF-4. Interacts with itself.

Functionally, associates with RNA polymerase to initiate transcription from late gene promoters. The protein is Late transcription factor 1 (OPG093) of Vaccinia virus (strain Ankara) (VACV).